Reading from the N-terminus, the 320-residue chain is UV DNA damage endonuclease (320 aa).

It belongs to the uve1/UvsE family.

In terms of biological role, component in a DNA repair pathway. Removal of UV LIGHT damaged nucleotides. Recognizes pyrimidine dimers and cleave a phosphodiester bond immediately 5' to the lesion. In Bacillus pumilus (strain SAFR-032), this protein is UV DNA damage endonuclease.